The primary structure comprises 309 residues: MDLARAELGEMLLYHHESVLTEAVVAYLQPQQGGAFLDVTLGGGGHSLALLQRGADRVVGLDRDPTALQAAQARLAAAGIPGNRLQLWHLNFADFDLQRHGFRDERGQGIPFDGIVADLGVSSPQLDCPERGFSFRAEGPLDMRMDPTADQETAADWVNRRPVEDLIDIFVRYGEERFARRIAHHIERSRPLFTTTQLAHVVWQAVPPAARRGRIHPATRIFQALRIAVNRELEALETLLAQAPNWLKPGGRLAVISFHSLEDRLVKWAFRTDPRWQVLTPKPLCPSELEQQRNSRARSAKLRVAARSS.

S-adenosyl-L-methionine-binding positions include 44–46, D62, F102, D118, and Q125; that span reads GGH. The segment at 289–309 is disordered; it reads LEQQRNSRARSAKLRVAARSS.

It belongs to the methyltransferase superfamily. RsmH family.

The protein resides in the cytoplasm. The enzyme catalyses cytidine(1402) in 16S rRNA + S-adenosyl-L-methionine = N(4)-methylcytidine(1402) in 16S rRNA + S-adenosyl-L-homocysteine + H(+). Specifically methylates the N4 position of cytidine in position 1402 (C1402) of 16S rRNA. This chain is Ribosomal RNA small subunit methyltransferase H, found in Synechococcus sp. (strain JA-3-3Ab) (Cyanobacteria bacterium Yellowstone A-Prime).